The chain runs to 182 residues: Keratin, high-sulfur matrix protein, B2D (182 aa).

Tandem repeats lie at residues 27–36, 37–46, 47–56, 57–66, 67–76, and 77–86. Residues 27–86 form a 6 X 10 AA tandem repeats region; sequence PTCCQTSCCQPTSIQTSCCQPTSIQTSCCQPTSIQTSCCQPISIQTSCCQPTCLQTSGCE.

Functionally, the keratin products of mammalian epidermal derivatives such as wool and hair consist of microfibrils embedded in a rigid matrix of other proteins. The matrix proteins include the high-sulfur and high-tyrosine keratins, having molecular weights of 6-20 kDa, whereas the microfibrils contain the larger, low-sulfur keratins (40-56 kDa). In Ovis aries (Sheep), this protein is Keratin, high-sulfur matrix protein, B2D.